A 317-amino-acid polypeptide reads, in one-letter code: Small ribosomal subunit protein uS2 (317 aa).

Residue Ser-2 is modified to N-acetylserine. Laminin-binding stretches follow at residues 161-180 and 205-229; these read IPCN…MLAR and RDPE…EFQG. [DE]-W-[ST] repeat units follow at residues 230–232, 245–247, 288–290, 297–299, and 315–317; these read EWS and DWS. The laminin-binding stretch occupies residues 242–317; it reads EVPDWSEGVQ…DWGGSTAEWS (76 aa). Residues 278 to 317 are disordered; it reads PGPTTEGYSEDWSAQPATEDWSAAPTAQAGDWGGSTAEWS.

It belongs to the universal ribosomal protein uS2 family. In terms of assembly, monomer (37LRP) and homodimer (67LR). Component of the small ribosomal subunit. Mature ribosomes consist of a small (40S) and a large (60S) subunit. The 40S subunit contains about 33 different proteins and 1 molecule of RNA (18S). The 60S subunit contains about 49 different proteins and 3 molecules of RNA (28S, 5.8S and 5S). Interacts with rps21. Interacts with several laminins including at least lamb1. Interacts with mdk. In terms of processing, acylated. Acylation may be a prerequisite for conversion of the monomeric 37 kDa laminin receptor precursor (37LRP) to the mature dimeric 67 kDa laminin receptor (67LR), and may provide a mechanism for membrane association. Post-translationally, cleaved by stromelysin-3 (ST3) at the cell surface. Cleavage by stromelysin-3 may be a mechanism to alter cell-extracellular matrix interactions.

Its subcellular location is the cell membrane. The protein localises to the cytoplasm. It is found in the nucleus. Its function is as follows. Required for the assembly and/or stability of the 40S ribosomal subunit. Required for the processing of the 20S rRNA-precursor to mature 18S rRNA in a late step of the maturation of 40S ribosomal subunits. Also functions as a cell surface receptor for laminin. Plays a role in cell adhesion to the basement membrane and in the consequent activation of signaling transduction pathways. May play a role in cell fate determination and tissue morphogenesis. This chain is Small ribosomal subunit protein uS2 (rpsa), found in Ictalurus punctatus (Channel catfish).